A 346-amino-acid polypeptide reads, in one-letter code: Ribulose-5-phosphate reductase (346 aa).

Zn(2+)-binding residues include cysteine 45, histidine 71, glutamate 72, and glutamate 151.

Belongs to the zinc-containing alcohol dehydrogenase family. The cofactor is Zn(2+).

The enzyme catalyses D-ribitol 5-phosphate + NADP(+) = D-ribulose 5-phosphate + NADPH + H(+). The protein operates within cell wall biogenesis; poly(ribitol phosphate) teichoic acid biosynthesis. In terms of biological role, catalyzes the NADPH dependent reduction of D-ribulose 5-phosphate to D-ribitol 5-phosphate. The polypeptide is Ribulose-5-phosphate reductase (Streptococcus pneumoniae (strain ATCC BAA-255 / R6)).